The sequence spans 179 residues: MVKVYIHDNKVDSDYRAPHNSGTELSLDELAKLGVIYKYCANEEEVNEIARQREYKNRDVVNICEGSFKSEAEFNEKLATFYQEHLHEDEEIRYCLEGAGYFDVRDASTPENWIRCLVESGDLLILPPGIYHRFTLTTSNHIKALRLFKDEPKWQAINRSNQADSLPVRKDYIALINQY.

His85, His87, Glu91, and His132 together coordinate Fe(2+). Ni(2+) contacts are provided by His85, His87, Glu91, and His132.

Belongs to the acireductone dioxygenase (ARD) family. The cofactor is Fe(2+). It depends on Ni(2+) as a cofactor.

Its subcellular location is the cytoplasm. The protein localises to the nucleus. The catalysed reaction is 1,2-dihydroxy-5-(methylsulfanyl)pent-1-en-3-one + O2 = 4-methylsulfanyl-2-oxobutanoate + formate + 2 H(+). It catalyses the reaction 1,2-dihydroxy-5-(methylsulfanyl)pent-1-en-3-one + O2 = 3-(methylsulfanyl)propanoate + CO + formate + 2 H(+). The protein operates within amino-acid biosynthesis; L-methionine biosynthesis via salvage pathway; L-methionine from S-methyl-5-thio-alpha-D-ribose 1-phosphate: step 5/6. Functionally, catalyzes 2 different reactions between oxygen and the acireductone 1,2-dihydroxy-3-keto-5-methylthiopentene (DHK-MTPene) depending upon the metal bound in the active site. Fe-containing acireductone dioxygenase (Fe-ARD) produces formate and 2-keto-4-methylthiobutyrate (KMTB), the alpha-ketoacid precursor of methionine in the methionine recycle pathway. Ni-containing acireductone dioxygenase (Ni-ARD) produces methylthiopropionate, carbon monoxide and formate, and does not lie on the methionine recycle pathway. The chain is Acireductone dioxygenase from Saccharomyces cerevisiae (strain ATCC 204508 / S288c) (Baker's yeast).